Reading from the N-terminus, the 293-residue chain is Ribosomal protein L11 methyltransferase (293 aa).

Positions 145, 166, 188, and 230 each coordinate S-adenosyl-L-methionine.

Belongs to the methyltransferase superfamily. PrmA family.

The protein localises to the cytoplasm. The enzyme catalyses L-lysyl-[protein] + 3 S-adenosyl-L-methionine = N(6),N(6),N(6)-trimethyl-L-lysyl-[protein] + 3 S-adenosyl-L-homocysteine + 3 H(+). Methylates ribosomal protein L11. The protein is Ribosomal protein L11 methyltransferase of Yersinia pseudotuberculosis serotype O:3 (strain YPIII).